A 400-amino-acid polypeptide reads, in one-letter code: MKFRTINEANVSGKRVLVRVDFNVPMSQGKVCDNTRLERHKETICALQKRGAKIILLSHCSRPRGKIVPELSLRPVAKALETIMGQQIFFVEECIGAPVQTAVEALQEGQILLLENLRFYKEEEDNNADFAEALAQQGDLYVNDAFSVSHRAHASVEAITHYLPSYAGMALQRELQALEKGLDNPKKPVTAIVGGAKVSSKLFVLNHLVTKVDYLVIGGGMANNFLMAQGHNVGKSLCEPMLMDMVKDVIEKARESHCTLVLPVDAVVGLQCETGTPHHHCMIEAIPDEGMILDIGEHSIARINTVIDASATLVWNGPLGVFEVSPFDHGTIAVARYAAARSQKGHCVSIAGGGDTVFALNHAGVADDFTYLSTAGGAFLEWMEGKTLPGVLALMQDLKN.

Residues 21-23, Arg36, 59-62, Arg118, and Arg151 contribute to the substrate site; these read DFN and HCSR. Residues Lys201, Glu323, and 353-356 each bind ATP; that span reads GGDT.

The protein belongs to the phosphoglycerate kinase family. As to quaternary structure, monomer.

The protein localises to the cytoplasm. The catalysed reaction is (2R)-3-phosphoglycerate + ATP = (2R)-3-phospho-glyceroyl phosphate + ADP. Its pathway is carbohydrate degradation; glycolysis; pyruvate from D-glyceraldehyde 3-phosphate: step 2/5. The chain is Phosphoglycerate kinase from Bartonella bacilliformis (strain ATCC 35685 / KC583 / Herrer 020/F12,63).